The following is a 393-amino-acid chain: uncharacterized protein (393 aa).

Residues C9, C15, C18, and C97 each contribute to the [4Fe-4S] cluster site. S-adenosyl-L-methionine contacts are provided by Q231, Y258, E279, and D325. C352 functions as the Nucleophile in the catalytic mechanism.

This sequence belongs to the class I-like SAM-binding methyltransferase superfamily. RNA M5U methyltransferase family.

This is an uncharacterized protein from Leptospira interrogans serogroup Icterohaemorrhagiae serovar Lai (strain 56601).